The primary structure comprises 429 residues: Phosphoribosylamine--glycine ligase (429 aa).

Residues 109–316 (KDFLARHQIP…LVELCLAAID (208 aa)) enclose the ATP-grasp domain. Position 135-196 (135-196 (VREQGAPIVV…EEFLDGEEAS (62 aa))) interacts with ATP. The tract at residues 212–234 (SQDHKRVGDKDTGPNTGGMGAYS) is disordered. The segment covering 213–223 (QDHKRVGDKDT) has biased composition (basic and acidic residues). Mg(2+) is bound by residues Glu286 and Asn288.

Belongs to the GARS family. Mg(2+) is required as a cofactor. The cofactor is Mn(2+).

The enzyme catalyses 5-phospho-beta-D-ribosylamine + glycine + ATP = N(1)-(5-phospho-beta-D-ribosyl)glycinamide + ADP + phosphate + H(+). It functions in the pathway purine metabolism; IMP biosynthesis via de novo pathway; N(1)-(5-phospho-D-ribosyl)glycinamide from 5-phospho-alpha-D-ribose 1-diphosphate: step 2/2. The chain is Phosphoribosylamine--glycine ligase from Vibrio vulnificus (strain YJ016).